A 211-amino-acid chain; its full sequence is Abscisic acid receptor PYL7 (211 aa).

The interval H29 to E180 is START-like. Intrachain disulfides connect C31-C161 and C36-C161. Residues K65, A93–E98, R120–S126, and E145 each bind abscisate. The Gate loop motif lies at S89–A93. Positions H119–L121 match the Latch loop motif.

This sequence belongs to the PYR/PYL/RCAR abscisic acid intracellular receptor family. In terms of assembly, homodimer. Binds ABA on one subunit only. Binds to CARs protein in an ABA-independent manner, both at the plasma membrane and in the nucleus. Interacts with ABI1, and possibly with other PP2Cs.

It localises to the cytoplasm. The protein localises to the nucleus. It is found in the cell membrane. Functionally, receptor for abscisic acid (ABA) required for ABA-mediated responses such as stomatal closure and germination inhibition. Inhibits the activity of group-A protein phosphatases type 2C (PP2Cs) when activated by ABA. The chain is Abscisic acid receptor PYL7 (PYL7) from Arabidopsis thaliana (Mouse-ear cress).